Consider the following 202-residue polypeptide: Lysozyme (202 aa).

Active-site residues include Asp8 and Glu99.

The protein belongs to the glycosyl hydrolase 25 family.

It catalyses the reaction Hydrolysis of (1-&gt;4)-beta-linkages between N-acetylmuramic acid and N-acetyl-D-glucosamine residues in a peptidoglycan and between N-acetyl-D-glucosamine residues in chitodextrins.. In terms of biological role, helps to release the mature phage particles from the cell wall by breaking down the peptidoglycan. The polypeptide is Lysozyme (lysA) (Lactobacillus delbrueckii (Lactococcus delbrueckii bacteriophage mv1)).